Reading from the N-terminus, the 119-residue chain is Large ribosomal subunit protein uL18 (119 aa).

The protein belongs to the universal ribosomal protein uL18 family. As to quaternary structure, part of the 50S ribosomal subunit; part of the 5S rRNA/L5/L18/L25 subcomplex. Contacts the 5S and 23S rRNAs.

In terms of biological role, this is one of the proteins that bind and probably mediate the attachment of the 5S RNA into the large ribosomal subunit, where it forms part of the central protuberance. This is Large ribosomal subunit protein uL18 from Lactobacillus johnsonii (strain CNCM I-12250 / La1 / NCC 533).